A 263-amino-acid polypeptide reads, in one-letter code: Indole-3-glycerol phosphate synthase (263 aa).

The protein belongs to the TrpC family.

The enzyme catalyses 1-(2-carboxyphenylamino)-1-deoxy-D-ribulose 5-phosphate + H(+) = (1S,2R)-1-C-(indol-3-yl)glycerol 3-phosphate + CO2 + H2O. Its pathway is amino-acid biosynthesis; L-tryptophan biosynthesis; L-tryptophan from chorismate: step 4/5. This is Indole-3-glycerol phosphate synthase from Sulfurimonas denitrificans (strain ATCC 33889 / DSM 1251) (Thiomicrospira denitrificans (strain ATCC 33889 / DSM 1251)).